Consider the following 845-residue polypeptide: Envelope glycoprotein gp160 (845 aa).

The first 28 residues, Met-1 to Gln-28, serve as a signal peptide directing secretion. The Extracellular segment spans residues Asn-29–Ile-673. Residues Cys-50 and Cys-70 are joined by a disulfide bond. N-linked (GlcNAc...) asparagine; by host glycosylation is found at Asn-84, Asn-126, Asn-132, Asn-133, Asn-136, Asn-149, Asn-153, Asn-179, Asn-180, Asn-190, Asn-223, Asn-227, Asn-234, Asn-255, Asn-269, Asn-286, Asn-294, Asn-324, Asn-331, and Asn-347. 5 disulfide bridges follow: Cys-115–Cys-198, Cys-122–Cys-189, Cys-127–Cys-150, Cys-211–Cys-240, and Cys-221–Cys-232. Residues Cys-127–Asn-149 are V1. Positions Cys-150 to Cys-189 are V2. The segment at Cys-289 to His-322 is V3. Cys-289 and Cys-323 form a disulfide bridge. Residues Asn-355–His-365 form a CD4-binding loop region. 2 disulfide bridges follow: Cys-369–Cys-434 and Cys-376–Cys-407. The segment at Cys-376–Cys-407 is V4. Asn-377, Asn-383, Asn-391, Asn-395, Asn-402, Asn-437, Asn-449, and Asn-454 each carry an N-linked (GlcNAc...) asparagine; by host glycan. 2 V5 regions span residues Ala-450–Gly-460 and Ala-452–Gly-460. Residues Ala-501 to Ala-521 are fusion peptide. Residues Lys-563–Leu-581 are immunosuppression. A disulfide bridge links Cys-587 with Cys-593. N-linked (GlcNAc...) asparagine; by host glycans are attached at residues Asn-600, Asn-605, Asn-614, and Asn-626. Residues Lys-622–Ala-656 are a coiled coil. An MPER; binding to GalCer region spans residues Ala-651 to Lys-672. A helical membrane pass occupies residues Phe-674–Val-694. Topologically, residues Asn-695 to Leu-845 are cytoplasmic. A YXXL motif; contains endocytosis signal motif is present at residues Tyr-701–Leu-704. Positions Thr-708 to Arg-731 are disordered. Positions Leu-844–Leu-845 match the Di-leucine internalization motif motif.

Belongs to the HIV-1 env protein family. As to quaternary structure, the mature envelope protein (Env) consists of a homotrimer of non-covalently associated gp120-gp41 heterodimers. The resulting complex protrudes from the virus surface as a spike. There seems to be as few as 10 spikes on the average virion. Interacts with host CD4, CCR5 and CXCR4. Gp120 also interacts with the C-type lectins CD209/DC-SIGN and CLEC4M/DC-SIGNR (collectively referred to as DC-SIGN(R)). Gp120 and gp41 interact with GalCer. Gp120 interacts with host ITGA4/ITGB7 complex; on CD4+ T-cells, this interaction results in rapid activation of integrin ITGAL/LFA-1, which facilitates efficient cell-to-cell spreading of HIV-1. Gp120 interacts with cell-associated heparan sulfate; this interaction increases virus infectivity on permissive cells and may be involved in infection of CD4- cells. In terms of assembly, the mature envelope protein (Env) consists of a homotrimer of non-covalently associated gp120-gp41 heterodimers. The resulting complex protrudes from the virus surface as a spike. There seems to be as few as 10 spikes on the average virion. In terms of processing, highly glycosylated by host. The high number of glycan on the protein is reffered to as 'glycan shield' because it contributes to hide protein sequence from adaptive immune system. Post-translationally, palmitoylation of the transmembrane protein and of Env polyprotein (prior to its proteolytic cleavage) is essential for their association with host cell membrane lipid rafts. Palmitoylation is therefore required for envelope trafficking to classical lipid rafts, but not for viral replication. Specific enzymatic cleavages in vivo yield mature proteins. Envelope glycoproteins are synthesized as an inactive precursor that is heavily N-glycosylated and processed likely by host cell furin in the Golgi to yield the mature SU and TM proteins. The cleavage site between SU and TM requires the minimal sequence [KR]-X-[KR]-R. About 2 of the 9 disulfide bonds of gp41 are reduced by P4HB/PDI, following binding to CD4 receptor.

Its subcellular location is the virion membrane. It localises to the host cell membrane. It is found in the host endosome membrane. Functionally, oligomerizes in the host endoplasmic reticulum into predominantly trimers. In a second time, gp160 transits in the host Golgi, where glycosylation is completed. The precursor is then proteolytically cleaved in the trans-Golgi and thereby activated by cellular furin or furin-like proteases to produce gp120 and gp41. In terms of biological role, attaches the virus to the host lymphoid cell by binding to the primary receptor CD4. This interaction induces a structural rearrangement creating a high affinity binding site for a chemokine coreceptor like CXCR4 and/or CCR5. Acts as a ligand for CD209/DC-SIGN and CLEC4M/DC-SIGNR, which are respectively found on dendritic cells (DCs), and on endothelial cells of liver sinusoids and lymph node sinuses. These interactions allow capture of viral particles at mucosal surfaces by these cells and subsequent transmission to permissive cells. HIV subverts the migration properties of dendritic cells to gain access to CD4+ T-cells in lymph nodes. Virus transmission to permissive T-cells occurs either in trans (without DCs infection, through viral capture and transmission), or in cis (following DCs productive infection, through the usual CD4-gp120 interaction), thereby inducing a robust infection. In trans infection, bound virions remain infectious over days and it is proposed that they are not degraded, but protected in non-lysosomal acidic organelles within the DCs close to the cell membrane thus contributing to the viral infectious potential during DCs' migration from the periphery to the lymphoid tissues. On arrival at lymphoid tissues, intact virions recycle back to DCs' cell surface allowing virus transmission to CD4+ T-cells. Its function is as follows. Acts as a class I viral fusion protein. Under the current model, the protein has at least 3 conformational states: pre-fusion native state, pre-hairpin intermediate state, and post-fusion hairpin state. During fusion of viral and target intracellular membranes, the coiled coil regions (heptad repeats) assume a trimer-of-hairpins structure, positioning the fusion peptide in close proximity to the C-terminal region of the ectodomain. The formation of this structure appears to drive apposition and subsequent fusion of viral and target cell membranes. Complete fusion occurs in host cell endosomes and is dynamin-dependent, however some lipid transfer might occur at the plasma membrane. The virus undergoes clathrin-dependent internalization long before endosomal fusion, thus minimizing the surface exposure of conserved viral epitopes during fusion and reducing the efficacy of inhibitors targeting these epitopes. Membranes fusion leads to delivery of the nucleocapsid into the cytoplasm. In Homo sapiens (Human), this protein is Envelope glycoprotein gp160.